A 185-amino-acid polypeptide reads, in one-letter code: Neuronal vesicle trafficking-associated protein 1 (185 aa).

Residues 1–82 are Cytoplasmic-facing; sequence MVKLGNNFAE…ITEGVTERFK (82 aa). The helical; Signal-anchor for type II membrane protein transmembrane segment at 83–103 threads the bilayer; sequence VSVLVLFALAFLTCVVFLVVY. The Lumenal portion of the chain corresponds to 104-185; it reads KVYKYDRACP…QETEAAEKSA (82 aa). A required for GRIP1 interaction region spans residues 129–164; the sequence is ESYYTEQDSSAREKFYTVINHYNLAKQSITRSVSPW.

Belongs to the NSG family. Forms a complex with GRIP1, GRIA2 and STX12; controls the intracellular fate of AMPAR and the endosomal sorting of the GRIA2 subunit toward recycling and membrane targeting. Interacts with GRIP1. Interacts with STX12. Interacts with APP; could regulate APP processing. Interacts with FAM171A1. Widely expressed in brain and spinal cord. Expressed in neurons during maturation and synapse formation.

Its subcellular location is the membrane. It is found in the golgi apparatus. The protein localises to the trans-Golgi network membrane. It localises to the endosome membrane. The protein resides in the cell projection. Its subcellular location is the dendrite. It is found in the early endosome membrane. The protein localises to the late endosome membrane. It localises to the lysosome lumen. The protein resides in the recycling endosome membrane. Its subcellular location is the cytoplasmic vesicle membrane. It is found in the golgi stack membrane. The protein localises to the endosome. It localises to the multivesicular body membrane. The protein resides in the endoplasmic reticulum membrane. In terms of biological role, plays a role in the recycling mechanism in neurons of multiple receptors, including AMPAR, APP and L1CAM and acts at the level of early endosomes to promote sorting of receptors toward a recycling pathway. Regulates sorting and recycling of GRIA2 through interaction with GRIP1 and then contributes to the regulation of synaptic transmission and plasticity by affecting the recycling and targeting of AMPA receptors to the synapse. Is required for faithful sorting of L1CAM to axons by facilitating trafficking from somatodendritic early endosome or the recycling endosome. In an other hand, induces apoptosis via the activation of CASP3 in response to DNA damage. This chain is Neuronal vesicle trafficking-associated protein 1, found in Rattus norvegicus (Rat).